Reading from the N-terminus, the 98-residue chain is N(2)-fixation sustaining protein CowN (98 aa).

Belongs to the CowN family.

Its function is as follows. Is required to sustain N(2)-dependent growth in the presence of low levels of carbon monoxide (CO). Probably acts by protecting the N(2) fixation ability of the nitrogenase complex, which is inactivated in the presence of CO. The chain is N(2)-fixation sustaining protein CowN from Dechloromonas aromatica (strain RCB).